We begin with the raw amino-acid sequence, 453 residues long: 3-phosphoshikimate 1-carboxyvinyltransferase (453 aa).

Residues K28, S29, and R33 each contribute to the 3-phosphoshikimate site. K28 is a phosphoenolpyruvate binding site. Residues G101 and R129 each contribute to the phosphoenolpyruvate site. Positions 174, 176, 326, and 353 each coordinate 3-phosphoshikimate. A phosphoenolpyruvate-binding site is contributed by Q176. The Proton acceptor role is filled by D326. Positions 357 and 405 each coordinate phosphoenolpyruvate.

This sequence belongs to the EPSP synthase family. Monomer.

Its subcellular location is the cytoplasm. It carries out the reaction 3-phosphoshikimate + phosphoenolpyruvate = 5-O-(1-carboxyvinyl)-3-phosphoshikimate + phosphate. It functions in the pathway metabolic intermediate biosynthesis; chorismate biosynthesis; chorismate from D-erythrose 4-phosphate and phosphoenolpyruvate: step 6/7. Functionally, catalyzes the transfer of the enolpyruvyl moiety of phosphoenolpyruvate (PEP) to the 5-hydroxyl of shikimate-3-phosphate (S3P) to produce enolpyruvyl shikimate-3-phosphate and inorganic phosphate. This chain is 3-phosphoshikimate 1-carboxyvinyltransferase, found in Zymomonas mobilis subsp. mobilis (strain ATCC 31821 / ZM4 / CP4).